We begin with the raw amino-acid sequence, 617 residues long: UvrABC system protein C (617 aa).

The GIY-YIG domain occupies 22-100 (KLPGVYRFFD…IKALSPKYNI (79 aa)). Positions 209–244 (DELTRTLQHKMQTAAANLQFEEAARYRDQIQALGII) constitute a UVR domain.

This sequence belongs to the UvrC family. In terms of assembly, interacts with UvrB in an incision complex.

The protein localises to the cytoplasm. In terms of biological role, the UvrABC repair system catalyzes the recognition and processing of DNA lesions. UvrC both incises the 5' and 3' sides of the lesion. The N-terminal half is responsible for the 3' incision and the C-terminal half is responsible for the 5' incision. This Neisseria gonorrhoeae (strain ATCC 700825 / FA 1090) protein is UvrABC system protein C.